Here is an 85-residue protein sequence, read N- to C-terminus: Dr hemagglutinin AFA-III operon regulatory protein AfaF (85 aa).

The protein to E.coli PapI and DaaF.

Its function is as follows. May have a possible regulatory function on the expression of the other AFA-III genes. This Escherichia coli protein is Dr hemagglutinin AFA-III operon regulatory protein AfaF (afaF).